Reading from the N-terminus, the 337-residue chain is Gastrula zinc finger protein XlCGF26.1 (337 aa).

C2H2-type zinc fingers lie at residues 6 to 28 (FDCT…YKIH), 34 to 56 (FICA…SKIH), 62 to 84 (FPCT…NKIH), 90 to 112 (FICA…SKIH), 118 to 140 (FPCT…NKIH), 146 to 168 (FICA…SKIH), 174 to 196 (FPCT…NKIH), 202 to 224 (FTCT…VKIH), 230 to 252 (FTCT…NKIH), 258 to 280 (FTCT…FKIH), 286 to 309 (FSCT…KRTH), and 315 to 337 (FTCT…NKIH).

Belongs to the krueppel C2H2-type zinc-finger protein family.

Its subcellular location is the nucleus. In terms of biological role, may be involved in transcriptional regulation. This chain is Gastrula zinc finger protein XlCGF26.1, found in Xenopus laevis (African clawed frog).